A 249-amino-acid polypeptide reads, in one-letter code: Ubiquinone biosynthesis O-methyltransferase (249 aa).

Residues R44, G75, D96, and M138 each coordinate S-adenosyl-L-methionine.

It belongs to the methyltransferase superfamily. UbiG/COQ3 family.

The enzyme catalyses a 3-demethylubiquinol + S-adenosyl-L-methionine = a ubiquinol + S-adenosyl-L-homocysteine + H(+). The catalysed reaction is a 3-(all-trans-polyprenyl)benzene-1,2-diol + S-adenosyl-L-methionine = a 2-methoxy-6-(all-trans-polyprenyl)phenol + S-adenosyl-L-homocysteine + H(+). It functions in the pathway cofactor biosynthesis; ubiquinone biosynthesis. O-methyltransferase that catalyzes the 2 O-methylation steps in the ubiquinone biosynthetic pathway. The protein is Ubiquinone biosynthesis O-methyltransferase of Paramagnetospirillum magneticum (strain ATCC 700264 / AMB-1) (Magnetospirillum magneticum).